The primary structure comprises 1139 residues: MSRRFTVTSLPPAASAASADPESRRHSVADPRRLPREDVKGDGNPKESSPFINSTDTEKGREYDGRNMALFEEEMDTSPMVSSLLSGLANYTNLPQGSKEHEEAENNEGGKKKPVQAPRMGTFMGVYLPCLQNIFGVILFLRLTWVVGIAGIMESFCMVFICCSCTMLTAISMSAIATNGVVPAGGSYYMISRSLGPEFGGAVGLCFYLGTTFAGAMYILGTIEILLAYLFPAMAIFKAEDASGEAAAMLNNMRVYGTCVLTCMATVVFVGVKYVNKFALVFLGCVILSILAIYAGVIKSAFDPPNFPICLLGNRTLSRHGFDVCAKLAWEGNETVTTRLWGLFCSSRLLNATCDEYFTRNNVTEIQGIPGAASGLIKENLWSSYLTKGVIVERRGMPSVGLADGTPVDMDHPYVFSDMTSYFTLLVGIYFPSVTGIMAGSNRSGDLRDAQKSIPTGTILAIATTSAVYISSVVLFGACIEGVVLRDKFGEAVNGNLVVGTLAWPSPWVIVIGSFFSTCGAGLQSLTGAPRLLQAISRDGIVPFLQVFGHGKANGEPTWALLLTACICEIGILIASLDEVAPILSMFFLMCYMFVNLACAVQTLLRTPNWRPRFRYYHWTLSFLGMSLCLALMFICSWYYALVAMLIAGLIYKYIEYRGAEKEWGDGIRGLSLSAARYALLRLEEGPPHTKNWRPQLLVLVRVDQDQNVVHPQLLSLTSQLKAGKGLTIVGSVLEGTFLDNHPQAQRAEESIRRLMEAEKVKGFCQVVISSNLRDGVSHLIQSGGLGGLQHNTVLVGWPRNWRQKEDHQTWRNFIELVRETTAGHLALLVTKNVSMFPGNPERFSEGSIDVWWIVHDGGMLMLLPFLLRHHKVWRKCKMRIFTVAQMDDNSIQMKKDLTTFLYHLRITAEVEVVEMHESDISAYTYEKTLVMEQRSQILKQMHLTKNEREREIQSITDESRGSIRRKNPANTRLRLNVPEETACDNEEKPEEEVQLIHDQSAPSCPSSSPSPGEEPEGEGETDPEKVHLTWTKDKSAAQKNKGPSPVSSEGIKDFFSMKPEWENLNQSNVRRMHTAVRLNEVIVNKSRDAKLVLLNMPGPPRNRNGDENYMEFLEVLTEQLDRVMLVRGGGREVITIYS.

2 disordered regions span residues 1 to 62 and 95 to 116; these read MSRR…KGRE and PQGSKEHEEAENNEGGKKKPVQ. At 1-98 the chain is on the cytoplasmic side; sequence MSRRFTVTSL…ANYTNLPQGS (98 aa). Over residues 21-45 the composition is skewed to basic and acidic residues; it reads PESRRHSVADPRRLPREDVKGDGNP. Positions 46–55 are enriched in polar residues; that stretch reads KESSPFINST. Thr57 bears the Phosphothreonine mark. The span at 98 to 111 shows a compositional bias: basic and acidic residues; the sequence is SKEHEEAENNEGGK. Residues 99–120 traverse the membrane as a discontinuously helical segment; sequence KEHEEAENNEGGKKKPVQAPRM. Lys113 lines the K(+) pocket. The Extracellular portion of the chain corresponds to 121-129; sequence GTFMGVYLP. The chain crosses the membrane as a helical span at residues 130–151; it reads CLQNIFGVILFLRLTWVVGIAG. At 152-174 the chain is on the cytoplasmic side; sequence IMESFCMVFICCSCTMLTAISMS. The chain crosses the membrane as a helical span at residues 175–203; that stretch reads AIATNGVVPAGGSYYMISRSLGPEFGGAV. Residue Ala184 coordinates chloride. The Extracellular segment spans residues 204–229; that stretch reads GLCFYLGTTFAGAMYILGTIEILLAY. The next 2 membrane-spanning stretches (helical) occupy residues 230–250 and 251–276; these read LFPAMAIFKAEDASGEAAAML and NNMRVYGTCVLTCMATVVFVGVKYVN. Residues 277–402 are Extracellular-facing; the sequence is KFALVFLGCV…ERRGMPSVGL (126 aa). The cysteines at positions 310 and 325 are disulfide-linked. N-linked (GlcNAc...) asparagine glycosylation is found at Asn314, Asn333, Asn351, and Asn362. A disulfide bridge links Cys345 with Cys354. A helical membrane pass occupies residues 403–420; that stretch reads ADGTPVDMDHPYVFSDMT. Met410 provides a ligand contact to K(+). Positions 414 and 415 each coordinate chloride. Over 421 to 429 the chain is Cytoplasmic; that stretch reads SYFTLLVGI. A helical membrane pass occupies residues 430–453; the sequence is YFPSVTGIMAGSNRSGDLRDAQKS. K(+) is bound at residue Asp446. Over 454 to 485 the chain is Extracellular; the sequence is IPTGTILAIATTSAVYISSVVLFGACIEGVVL. A helical membrane pass occupies residues 486–513; the sequence is RDKFGEAVNGNLVVGTLAWPSPWVIVIG. The Cytoplasmic portion of the chain corresponds to 514–534; it reads SFFSTCGAGLQSLTGAPRLLQ. The next 2 membrane-spanning stretches (helical) occupy residues 535–555 and 556–578; these read AISRDGIVPFLQVFGHGKANG and EPTWALLLTACICEIGILIASLD. Glu569 is a chloride binding site. The Cytoplasmic portion of the chain corresponds to 579–592; that stretch reads EVAPILSMFFLMCY. The next 2 helical transmembrane spans lie at 593-615 and 616-632; these read MFVNLACAVQTLLRTPNWRPRFR and YYHWTLSFLGMSLCLAL. The Cytoplasmic portion of the chain corresponds to 633 to 1139; the sequence is MFICSWYYAL…GGREVITIYS (507 aa). Positions 667 to 681 are scissor helix; sequence GIRGLSLSAARYALL. Residue Thr929 is modified to Phosphothreonine; by OXSR1 and STK39. Residues 943-1025 are disordered; the sequence is HLTKNERERE…PEGEGETDPE (83 aa). Over residues 945–962 the composition is skewed to basic and acidic residues; the sequence is TKNEREREIQSITDESRG. Positions 982–994 are enriched in acidic residues; the sequence is TACDNEEKPEEEV. Positions 1003-1012 are enriched in low complexity; that stretch reads PSCPSSSPSP. The residue at position 1030 (Thr1030) is a Phosphothreonine; by OXSR1 and STK39. The disordered stretch occupies residues 1033–1052; it reads KDKSAAQKNKGPSPVSSEGI. Residues Ser1045, Ser1048, and Ser1049 each carry the phosphoserine modification.

Belongs to the SLC12A transporter family. K/Cl co-transporter subfamily. In terms of assembly, homodimer; adopts a domain-swap conformation at the scissor helices connecting the transmembrane domain and C-terminal domain. Heterodimer wHeterodimer with K-Cl cotransporters SLC12A6 and SLC12A7. Interacts with AP2A1. Phosphorylated at Thr-929 and Thr-1030 by OXSR1/OSR1 and STK39/SPAK downstream of WNK kinases (WNK1, WNK2, WNK3 or WNK4), inhibiting the potassium-chloride cotransport activity. As to expression, highly expressed in brain. Not detected in other tissues. Highly expressed in pyramidal neurons and in neurons throughout the cortex, hippocampus, the granular layer of the cerebellum and in groups of neurons throughout the brainstem. Barely detectable in dorsal-root ganglions.

It localises to the cell membrane. Its subcellular location is the cell projection. The protein resides in the dendrite. The enzyme catalyses K(+)(in) + chloride(in) = K(+)(out) + chloride(out). Its activity is regulated as follows. Inhibited following phosphorylation by OXSR1/OSR1 and STK39/SPAK: phosphorylation takes place downstream of WNK kinases (WNK1, WNK2, WNK3 or WNK4) in response to hyperosmotic stress and subsequent cell shrinkage. In terms of biological role, mediates electroneutral potassium-chloride cotransport in mature neurons and is required for neuronal Cl(-) homeostasis. As major extruder of intracellular chloride, it establishes the low neuronal Cl(-) levels required for chloride influx after binding of GABA-A and glycine to their receptors, with subsequent hyperpolarization and neuronal inhibition. Involved in the regulation of dendritic spine formation and maturation. This is Solute carrier family 12 member 5 (Slc12a5) from Rattus norvegicus (Rat).